A 250-amino-acid polypeptide reads, in one-letter code: Probable transcriptional regulatory protein SAV_6832 (250 aa).

Belongs to the TACO1 family.

The protein resides in the cytoplasm. The sequence is that of Probable transcriptional regulatory protein SAV_6832 from Streptomyces avermitilis (strain ATCC 31267 / DSM 46492 / JCM 5070 / NBRC 14893 / NCIMB 12804 / NRRL 8165 / MA-4680).